The chain runs to 179 residues: Adenine phosphoribosyltransferase (179 aa).

It belongs to the purine/pyrimidine phosphoribosyltransferase family. In terms of assembly, homodimer.

It localises to the cytoplasm. The catalysed reaction is AMP + diphosphate = 5-phospho-alpha-D-ribose 1-diphosphate + adenine. It participates in purine metabolism; AMP biosynthesis via salvage pathway; AMP from adenine: step 1/1. Functionally, catalyzes a salvage reaction resulting in the formation of AMP, that is energically less costly than de novo synthesis. The polypeptide is Adenine phosphoribosyltransferase (Beijerinckia indica subsp. indica (strain ATCC 9039 / DSM 1715 / NCIMB 8712)).